A 557-amino-acid polypeptide reads, in one-letter code: Urocanate hydratase (557 aa).

Residues 52–53 (GG), Gln130, 176–178 (GMG), Glu196, 242–243 (NA), 263–267 (QTSAH), 273–274 (YL), and Tyr322 each bind NAD(+). Residue Cys410 is part of the active site. Gly492 contacts NAD(+).

The protein belongs to the urocanase family. It depends on NAD(+) as a cofactor.

It is found in the cytoplasm. The catalysed reaction is 4-imidazolone-5-propanoate = trans-urocanate + H2O. It participates in amino-acid degradation; L-histidine degradation into L-glutamate; N-formimidoyl-L-glutamate from L-histidine: step 2/3. In terms of biological role, catalyzes the conversion of urocanate to 4-imidazolone-5-propionate. The polypeptide is Urocanate hydratase (Rhizobium meliloti (strain 1021) (Ensifer meliloti)).